Reading from the N-terminus, the 321-residue chain is ATP phosphoribosyltransferase regulatory subunit (321 aa).

It belongs to the class-II aminoacyl-tRNA synthetase family. HisZ subfamily. Heteromultimer composed of HisG and HisZ subunits.

Its subcellular location is the cytoplasm. It participates in amino-acid biosynthesis; L-histidine biosynthesis; L-histidine from 5-phospho-alpha-D-ribose 1-diphosphate: step 1/9. In terms of biological role, required for the first step of histidine biosynthesis. May allow the feedback regulation of ATP phosphoribosyltransferase activity by histidine. The polypeptide is ATP phosphoribosyltransferase regulatory subunit (Thiobacillus denitrificans (strain ATCC 25259 / T1)).